The chain runs to 113 residues: MGLKEYLFGKSSEDRACEFLRKLGFVILERNFHSKFGEIDIIALSSDKILHFIEVKATSGGYEAEYRLNKAKYMKILKTINFYMMKNEPNRDYQLDLLVVKNENFELIENISL.

Belongs to the UPF0102 family.

The sequence is that of UPF0102 protein Ccon26_01140 from Campylobacter concisus (strain 13826).